Consider the following 433-residue polypeptide: uncharacterized protein (433 aa).

The chain crosses the membrane as a helical span at residues 36–58 (YYYYVQLAFKMLVGVLKNLPVVY). The tract at residues 169-433 (VRVPSRDLQP…GEGRDLPEDN (265 aa)) is disordered. Composition is skewed to acidic residues over residues 216 to 227 (GEPGENGDESDE) and 234 to 254 (GDEDAAQSEQNNDDGMDYESD). Basic and acidic residues-rich tracts occupy residues 265–280 (EPDRRHDAEAGERGSE), 354–364 (GGRRPARRDSP), and 422–433 (RRGEGRDLPEDN).

Its subcellular location is the host membrane. This is an uncharacterized protein from Psittacid herpesvirus 1 (isolate Amazon parrot/-/97-0001/1997) (PsHV-1).